The sequence spans 305 residues: Tyrosine recombinase XerC (305 aa).

Positions 4–95 (TSIQALINKW…AVKNFYRFLE (92 aa)) constitute a Core-binding (CB) domain. The 183-residue stretch at 116–298 (LLPKALSEDD…SIKHLEAVYT (183 aa)) folds into the Tyr recombinase domain. Residues Arg159, Lys182, His250, Arg253, and His276 contribute to the active site. The active-site O-(3'-phospho-DNA)-tyrosine intermediate is the Tyr285.

The protein belongs to the 'phage' integrase family. XerC subfamily. As to quaternary structure, forms a cyclic heterotetrameric complex composed of two molecules of XerC and two molecules of XerD.

Its subcellular location is the cytoplasm. Its function is as follows. Site-specific tyrosine recombinase, which acts by catalyzing the cutting and rejoining of the recombining DNA molecules. The XerC-XerD complex is essential to convert dimers of the bacterial chromosome into monomers to permit their segregation at cell division. It also contributes to the segregational stability of plasmids. The polypeptide is Tyrosine recombinase XerC (Rickettsia africae (strain ESF-5)).